Reading from the N-terminus, the 1398-residue chain is MAP-homologous protein 1 (1398 aa).

Met1 carries the N-acetylmethionine modification. Positions 21–77 are disordered; it reads GWLVRPSASTSKSSRPGKSESKANSVAPDIQMDTARPPVFETSVDSSSSILSSNDKG. A compositionally biased stretch (polar residues) spans 27 to 36; it reads SASTSKSSRP. The segment covering 63–73 has biased composition (low complexity); that stretch reads SVDSSSSILSS. The residue at position 81 (Ser81) is a Phosphoserine. Disordered stretches follow at residues 90 to 144, 156 to 186, and 191 to 210; these read NQRA…APAP, HRKK…GAAI, and TATI…PPSY. Composition is skewed to polar residues over residues 91-102 and 114-123; these read QRANAGSTSVPT and VVETNLSNVE. The segment covering 159-186 has biased composition (basic and acidic residues); that stretch reads KDQEQQEKERERKERSPSPTHVDRGAAI. A Glycyl lysine isopeptide (Lys-Gly) (interchain with G-Cter in ubiquitin) cross-link involves residue Lys221. Thr222 is subject to Phosphothreonine. Disordered stretches follow at residues 244–270, 296–382, 395–428, and 515–548; these read HSPE…PDPR, SSAS…PSSH, GNNN…SSME, and NPEE…NNSQ. 4 positions are modified to phosphoserine: Ser309, Ser311, Ser354, and Ser357. A compositionally biased stretch (low complexity) spans 357-371; that stretch reads SIVDTVDSNSDVSSS. The segment covering 372–381 has biased composition (polar residues); the sequence is AQNNNQTPSS. Residues 396–426 are compositionally biased toward low complexity; the sequence is NNNNNSTNASSLSANVNNPDTSSTSLWSSSS. A compositionally biased stretch (basic and acidic residues) spans 521–538; the sequence is ANAKSKEEMAPQKQNEVE. Thr577 carries the post-translational modification Phosphothreonine. The segment covering 605-615 has biased composition (low complexity); it reads STSSLASMVSS. Disordered stretches follow at residues 605 to 630, 1148 to 1169, and 1203 to 1223; these read STSS…EILP, LKSP…PNSE, and DAED…HEDV. Positions 1160-1169 are enriched in polar residues; the sequence is GGNQAQPNSE. Basic and acidic residues predominate over residues 1208-1223; it reads VEFREGDDSNVNHEDV. Positions 1227-1258 are tau/MAP repeat-like; that stretch reads DQQFRDEVDIKNKYSIIKRELEHEKLVGGGDL. The disordered stretch occupies residues 1313–1372; that stretch reads QEETAFRTKDEQQSSQSNDSSANASPTTDPISTGSNTSRTNDNAHIPPTDAPGFDKFMNN. The segment covering 1325–1337 has biased composition (low complexity); it reads QSSQSNDSSANAS. Over residues 1338-1355 the composition is skewed to polar residues; that stretch reads PTTDPISTGSNTSRTNDN.

It is found in the cytoplasm. The protein resides in the cytoskeleton. It localises to the spindle. Its function is as follows. Essential for the formation and/or stabilization of microtubules. Binds to microtubules in vitro. In Saccharomyces cerevisiae (strain ATCC 204508 / S288c) (Baker's yeast), this protein is MAP-homologous protein 1 (MHP1).